The primary structure comprises 179 residues: Probable mitochondrial import inner membrane translocase subunit Tim17 1 (179 aa).

3 consecutive transmembrane segments (helical) span residues 17–37, 61–81, and 113–133; these read CGGAFAMGALGGGAFQAIKGF, LVGGNFAVWGATFSAIDCSLV, and LSSALVGGALLALIEGVGIVV.

The protein belongs to the Tim17/Tim22/Tim23 family. As to quaternary structure, component of the TIM23 complex at least composed of Tim23, Tim17 (Tim17a1, Tim17a2 or Tim17b1) and a Tim50. The complex interacts with the Tim44 component of the PAM complex.

It localises to the mitochondrion inner membrane. Its function is as follows. Essential component of the TIM23 complex, a complex that mediates the translocation of transit peptide-containing proteins across the mitochondrial inner membrane. The chain is Probable mitochondrial import inner membrane translocase subunit Tim17 1 (Tim17b1) from Drosophila melanogaster (Fruit fly).